Consider the following 232-residue polypeptide: TIR domain-containing adapter molecule 2 (232 aa).

Over residues 1 to 39 (MGVGKSKLDKCPLSWHKKDSVDADQDGHESDSKNSEEAC) the composition is skewed to basic and acidic residues. Residues 1–70 (MGVGKSKLDK…EAKGAGPEEQ (70 aa)) are disordered. Residue Gly-2 is the site of N-myristoyl glycine attachment. In terms of domain architecture, TIR spans 74–226 (EFLKFVILHA…SIWKETRSVS (153 aa)). Tyr-164 bears the Phosphotyrosine mark.

Homodimer. Interacts with TLR4, TICAM1, IRF3 and IRF7 in response to LPS. Interacts with IL1R1, IL1RAP, IRAK2, IRAK3 and TRAF6. Interacts with protein kinase-inactive mutants of IRAK1 and IRAK4. Isoform 1 interacts with isoform 2; the interaction occurs in late endosomes and disrupts the interaction between isoform 1 and TICAM1. Interacts with MYD88; the interaction decreases after IL-18 stimulation in a time-dependent manner. Interacts with IL18R1 and IL18RAP. Interacts with TLR2. Interacts with RAB11FIP2. Post-translationally, myristoylated. Required for membrane association which is critical for its ability to initiate efficient signaling. Phosphorylated by PRKCE in response to LPS. Phosphorylation is essential for its function. It is depleted from the membrane upon phosphorylation. Tyrosine phosphorylation is inhibited by phosphatase PTPN4.

The protein resides in the cytoplasm. It localises to the golgi apparatus. Its subcellular location is the cell membrane. The protein localises to the early endosome. It is found in the late endosome. The protein resides in the endoplasmic reticulum. It localises to the cell projection. Its subcellular location is the phagocytic cup. Functionally, functions as a sorting adapter in different signaling pathways to facilitate downstream signaling leading to type I interferon induction. In TLR4 signaling, physically bridges TLR4 and TICAM1 and functionally transmits signal to TICAM1 in early endosomes after endocytosis of TLR4. In TLR2 signaling, physically bridges TLR2 and MYD88 and is required for the TLR2-dependent movement of MYD88 to endosomes following ligand engagement. Involved in IL-18 signaling and is proposed to function as a sorting adapter for MYD88 in IL-18 signaling during adaptive immune response. Forms a complex with RAB11FIP2 that is recruited to the phagosomes to promote the activation of the actin-regulatory GTPases RAC1 and CDC42 and subsequent phagocytosis of Gram-negative bacteria. The sequence is that of TIR domain-containing adapter molecule 2 (Ticam2) from Mus musculus (Mouse).